The following is an 823-amino-acid chain: ATP-dependent RNA helicase HrpA (823 aa).

The region spanning 16-179 (IKVLKNHNVL…FNNAPVVSIE (164 aa)) is the Helicase ATP-binding domain. Position 29–36 (29–36 (SPTGSGKT)) interacts with ATP. A DEAH box motif is present at residues 126 to 129 (DEAH). A Helicase C-terminal domain is found at 203–374 (KIKEIVLNVI…EVVLRMADIG (172 aa)).

Belongs to the DEAD box helicase family. DEAH subfamily.

It catalyses the reaction ATP + H2O = ADP + phosphate + H(+). Has RNA-stimulated ATPase activity and RNA helicase activity. Involved in global regulation of gene expression. Could be involved in RNA processing and post-transcriptional gene regulation. Essential for both tick transmission and mouse infection. The chain is ATP-dependent RNA helicase HrpA from Borreliella burgdorferi (strain ATCC 35210 / DSM 4680 / CIP 102532 / B31) (Borrelia burgdorferi).